A 493-amino-acid polypeptide reads, in one-letter code: Cytochrome P450 2E1 (493 aa).

Position 298–303 (298–303 (FAGTET)) interacts with substrate. Heme is bound at residue cysteine 437.

It belongs to the cytochrome P450 family. As to quaternary structure, interacts with chaperones HSP70 and HSP90; this interaction is required for initial targeting to mitochondria. The cofactor is heme.

It is found in the endoplasmic reticulum membrane. It localises to the microsome membrane. Its subcellular location is the mitochondrion inner membrane. It catalyses the reaction an organic molecule + reduced [NADPH--hemoprotein reductase] + O2 = an alcohol + oxidized [NADPH--hemoprotein reductase] + H2O + H(+). The enzyme catalyses (5Z,8Z,11Z)-eicosatrienoate + reduced [NADPH--hemoprotein reductase] + O2 = 19-hydroxy-(5Z,8Z,11Z)-eicosatrienoate + oxidized [NADPH--hemoprotein reductase] + H2O + H(+). The catalysed reaction is (5Z,8Z,11Z,14Z,17Z)-eicosapentaenoate + reduced [NADPH--hemoprotein reductase] + O2 = 19-hydroxy-(5Z,8Z,11Z,14Z,17Z)-eicosapentaenoate + oxidized [NADPH--hemoprotein reductase] + H2O + H(+). It carries out the reaction (4Z,7Z,10Z,13Z,16Z,19Z)-docosahexaenoate + reduced [NADPH--hemoprotein reductase] + O2 = 21-hydroxy-(4Z,7Z,10Z,13Z,16Z,19Z)-docosahexaenoate + oxidized [NADPH--hemoprotein reductase] + H2O + H(+). It catalyses the reaction dodecanoate + reduced [NADPH--hemoprotein reductase] + O2 = 11-hydroxydodecanoate + oxidized [NADPH--hemoprotein reductase] + H2O + H(+). The enzyme catalyses tetradecanoate + reduced [NADPH--hemoprotein reductase] + O2 = 13-hydroxytetradecanoate + oxidized [NADPH--hemoprotein reductase] + H2O + H(+). The catalysed reaction is 4-nitrophenol + NADPH + O2 + H(+) = 4-nitrocatechol + NADP(+) + H2O. The protein operates within lipid metabolism; fatty acid metabolism. The omega-1 hydroxylase activity is stimulated by cytochrome b5. Functionally, a cytochrome P450 monooxygenase involved in the metabolism of fatty acids. Mechanistically, uses molecular oxygen inserting one oxygen atom into a substrate, and reducing the second into a water molecule, with two electrons provided by NADPH via cytochrome P450 reductase (NADPH--hemoprotein reductase). Catalyzes the hydroxylation of carbon-hydrogen bonds. Hydroxylates fatty acids specifically at the omega-1 position displaying the highest catalytic activity for saturated fatty acids. May be involved in the oxidative metabolism of xenobiotics. This chain is Cytochrome P450 2E1, found in Rattus norvegicus (Rat).